The sequence spans 1405 residues: DNA-directed RNA polymerase subunit beta' (1405 aa).

Residues Cys-70, Cys-72, Cys-85, and Cys-88 each coordinate Zn(2+). 3 residues coordinate Mg(2+): Asp-460, Asp-462, and Asp-464. Zn(2+) contacts are provided by Cys-815, Cys-890, Cys-897, and Cys-900. Positions 1375 to 1405 (GLTDSEMETLSGKPAGAEPVAALADAGADEE) are disordered.

This sequence belongs to the RNA polymerase beta' chain family. As to quaternary structure, the RNAP catalytic core consists of 2 alpha, 1 beta, 1 beta' and 1 omega subunit. When a sigma factor is associated with the core the holoenzyme is formed, which can initiate transcription. It depends on Mg(2+) as a cofactor. Zn(2+) serves as cofactor.

It catalyses the reaction RNA(n) + a ribonucleoside 5'-triphosphate = RNA(n+1) + diphosphate. Functionally, DNA-dependent RNA polymerase catalyzes the transcription of DNA into RNA using the four ribonucleoside triphosphates as substrates. The chain is DNA-directed RNA polymerase subunit beta' from Xanthomonas oryzae pv. oryzae (strain MAFF 311018).